Consider the following 254-residue polypeptide: Cytokine-inducible SH2-containing protein (254 aa).

Residues 82–188 enclose the SH2 domain; the sequence is WYWGSITASE…ATTPALPTPK (107 aa). The tract at residues 171–195 is disordered; that stretch reads TRSDSPDLATTPALPTPKEDAPGDP. The 49-residue stretch at 205 to 253 folds into the SOCS box domain; that stretch reads KLVQPFVRRSSTRSLQHLCRLVINRLVVDVDCLPLPRRMADYLRQYPFQ.

In terms of assembly, stably associated with the tyrosine-phosphorylated IL3 receptor beta chain and tyrosine-phosphorylated EPO receptor (EPOR).

It functions in the pathway protein modification; protein ubiquitination. Its function is as follows. SOCS family proteins form part of a classical negative feedback system that regulates cytokine signal transduction. CIS is involved in the negative regulation of cytokines that signal through the JAK-STAT5 pathway such as erythropoietin, prolactin and interleukin 3 (IL3) receptor. Inhibits STAT5 trans-activation by suppressing its tyrosine phosphorylation. May be a substrate recognition component of a SCF-like ECS (Elongin BC-CUL2/5-SOCS-box protein) E3 ubiquitin-protein ligase complex which mediates the ubiquitination and subsequent proteasomal degradation of target proteins. The polypeptide is Cytokine-inducible SH2-containing protein (CISH) (Bos taurus (Bovine)).